The following is a 154-amino-acid chain: Putative pre-16S rRNA nuclease (154 aa).

This sequence belongs to the YqgF nuclease family.

It localises to the cytoplasm. Functionally, could be a nuclease involved in processing of the 5'-end of pre-16S rRNA. The chain is Putative pre-16S rRNA nuclease from Rickettsia akari (strain Hartford).